Reading from the N-terminus, the 114-residue chain is SLYDIAPVTPGVAVDLSHIPTDVKIKGFSGEDATPALEGADVVLISAGVARKPGMDRSDLFNVNAGIVKNLVQQIAKTRPQACIGIITNPVNTTVAIAAEVLKKAGVYDKNKLF.

Aspartate 4 serves as a coordination point for NAD(+). Residues arginine 51 and arginine 57 each coordinate substrate. NAD(+) contacts are provided by residues asparagine 64 and isoleucine 87 to asparagine 89. Asparagine 89 contributes to the substrate binding site.

This sequence belongs to the LDH/MDH superfamily. MDH type 1 family. Homodimer.

It carries out the reaction (S)-malate + NAD(+) = oxaloacetate + NADH + H(+). Functionally, catalyzes the reversible oxidation of malate to oxaloacetate. This Klebsiella pneumoniae subsp. rhinoscleromatis protein is Malate dehydrogenase (mdh).